The primary structure comprises 133 residues: Small ribosomal subunit protein uS11 (133 aa).

The disordered stretch occupies residues 114 to 133 (VTPIPHDGTRPPGGKRGRRV).

This sequence belongs to the universal ribosomal protein uS11 family. Part of the 30S ribosomal subunit.

Functionally, located on the platform of the 30S subunit. In Archaeoglobus fulgidus (strain ATCC 49558 / DSM 4304 / JCM 9628 / NBRC 100126 / VC-16), this protein is Small ribosomal subunit protein uS11.